We begin with the raw amino-acid sequence, 306 residues long: Aspartate carbamoyltransferase catalytic subunit (306 aa).

2 residues coordinate carbamoyl phosphate: arginine 55 and threonine 56. Lysine 84 contributes to the L-aspartate binding site. Arginine 105, histidine 133, and glutamine 136 together coordinate carbamoyl phosphate. Residues arginine 166 and arginine 227 each coordinate L-aspartate. The carbamoyl phosphate site is built by leucine 265 and proline 266.

Belongs to the aspartate/ornithine carbamoyltransferase superfamily. ATCase family. Heterododecamer (2C3:3R2) of six catalytic PyrB chains organized as two trimers (C3), and six regulatory PyrI chains organized as three dimers (R2).

The catalysed reaction is carbamoyl phosphate + L-aspartate = N-carbamoyl-L-aspartate + phosphate + H(+). The protein operates within pyrimidine metabolism; UMP biosynthesis via de novo pathway; (S)-dihydroorotate from bicarbonate: step 2/3. Its function is as follows. Catalyzes the condensation of carbamoyl phosphate and aspartate to form carbamoyl aspartate and inorganic phosphate, the committed step in the de novo pyrimidine nucleotide biosynthesis pathway. This is Aspartate carbamoyltransferase catalytic subunit from Neisseria gonorrhoeae (strain NCCP11945).